Reading from the N-terminus, the 258-residue chain is Tryptophan synthase alpha chain (258 aa).

Active-site proton acceptor residues include Glu-52 and Asp-63.

Belongs to the TrpA family. In terms of assembly, tetramer of two alpha and two beta chains.

The enzyme catalyses (1S,2R)-1-C-(indol-3-yl)glycerol 3-phosphate + L-serine = D-glyceraldehyde 3-phosphate + L-tryptophan + H2O. Its pathway is amino-acid biosynthesis; L-tryptophan biosynthesis; L-tryptophan from chorismate: step 5/5. In terms of biological role, the alpha subunit is responsible for the aldol cleavage of indoleglycerol phosphate to indole and glyceraldehyde 3-phosphate. In Streptococcus pneumoniae serotype 2 (strain D39 / NCTC 7466), this protein is Tryptophan synthase alpha chain.